Here is a 292-residue protein sequence, read N- to C-terminus: Chondroitin proteoglycan 3 (292 aa).

The first 17 residues, M1–A17, serve as a signal peptide directing secretion. Positions D28–V103 are disordered. Over residues G38–S80 the composition is skewed to low complexity. The segment covering S81 to S96 has biased composition (acidic residues). N-linked (GlcNAc...) asparagine glycosylation is found at N174 and N254.

The sequence is that of Chondroitin proteoglycan 3 from Caenorhabditis elegans.